We begin with the raw amino-acid sequence, 612 residues long: Kelch-like protein 40a (612 aa).

Residues 34 to 101 (VDCILKIKDK…IYTSDINLTE (68 aa)) enclose the BTB domain. The 103-residue stretch at 136–238 (CLAIFRLGLL…PTSYFKEKVE (103 aa)) folds into the BACK domain. A compositionally biased stretch (basic residues) spans 266-275 (RVKRSSHRKE). Positions 266 to 290 (RVKRSSHRKEGKSAEFESDDDDEDG) are disordered. The segment covering 281-290 (FESDDDDEDG) has biased composition (acidic residues). 5 Kelch repeats span residues 350 to 402 (QIFV…EAEN), 403 to 452 (SIYV…SHKG), 453 to 500 (LVYV…VHKN), 502 to 547 (IYVV…ELGG), and 549 to 604 (LYAI…GVRL).

It belongs to the KLHL40 family. In terms of assembly, component of the BCR(KLHL40) E3 ubiquitin ligase complex. Expressed in skeletal muscle and heart. Detected, although at much lower levels, in brain, eye and fin.

It is found in the cytoplasm. It localises to the myofibril. The protein localises to the sarcomere. The protein resides in the a band. Its subcellular location is the i band. Functionally, substrate-specific adapter of a BCR (BTB-CUL3-RBX1) E3 ubiquitin ligase complex. Required for skeletal muscle development. This Danio rerio (Zebrafish) protein is Kelch-like protein 40a (klhl40a).